A 393-amino-acid polypeptide reads, in one-letter code: 2-nitroimidazole transporter (393 aa).

Residues 1 to 12 lie on the Cytoplasmic side of the membrane; sequence MTCSTSLSGKNR. Residues 13–33 traverse the membrane as a helical segment; that stretch reads IVLIAGILMIATTLRVTFTGA. Over 34-52 the chain is Periplasmic; it reads APLLDTIRSAYSLTTAQTG. The helical transmembrane segment at 53–73 threads the bilayer; it reads LLTTLPLLAFALISPLAAPVA. The Cytoplasmic portion of the chain corresponds to 74 to 80; it reads RRFGMER. 2 consecutive transmembrane segments (helical) span residues 81–101 and 102–122; these read SLFAALLLICAGIAIRSLPSP and YLLFGGTAVIGGGIALGNVLL. At 123–140 the chain is on the cytoplasmic side; sequence PGLIKRDFPHSVARLTGA. The chain crosses the membrane as a helical span at residues 141–161; sequence YSLTMGAAAALGSAMVVPLAL. The Periplasmic portion of the chain corresponds to 162-163; that stretch reads NG. A helical membrane pass occupies residues 164-184; the sequence is FGWQGALLMLMCFPLLALFLW. The Cytoplasmic portion of the chain corresponds to 185 to 218; the sequence is LPQWRSQQHANLSTSRALHTRGIWRSPLAWQVTL. Residues 219-239 form a helical membrane-spanning segment; it reads FLGINSLVYYVIIGWLPAILI. Residues 240–249 are Periplasmic-facing; sequence SHGYSEAQAG. The helical transmembrane segment at 250–270 threads the bilayer; that stretch reads SLHGLLQLATAAPGLLIPLFL. At 271–278 the chain is on the cytoplasmic side; the sequence is HHVKDQRG. The helical transmembrane segment at 279 to 299 threads the bilayer; the sequence is IAAFVALMCAVGAVGLCFMPA. Residues 300–304 are Periplasmic-facing; the sequence is HAITW. A helical membrane pass occupies residues 305-325; it reads TLLFGFGSGATMILGLTFIGL. At 326 to 334 the chain is on the cytoplasmic side; it reads RASSAHQAA. The chain crosses the membrane as a helical span at residues 335 to 355; the sequence is ALSGMAQSVGYLLAACGPPLM. At 356 to 366 the chain is on the periplasmic side; that stretch reads GKIHDANGNWS. The chain crosses the membrane as a helical span at residues 367–387; it reads VPLMGVAILSLLMAIFGLCAG. Over 388–393 the chain is Cytoplasmic; it reads RDKEIR.

This sequence belongs to the major facilitator superfamily. Cyanate porter (TC 2.A.1.17) family.

The protein localises to the cell inner membrane. In terms of biological role, involved in efflux of 2-nitroimidazole. This is 2-nitroimidazole transporter from Escherichia coli (strain K12).